The primary structure comprises 326 residues: Putative ribose-phosphate pyrophosphokinase 2 (326 aa).

ATP-binding positions include 43–45 (DGE) and 102–103 (RQ). His-136 is a Mg(2+) binding site. Residues Asp-226 and 230-234 (NTGKT) each bind D-ribose 5-phosphate.

This sequence belongs to the ribose-phosphate pyrophosphokinase family. Class I subfamily. In terms of assembly, homohexamer. Mg(2+) is required as a cofactor.

It localises to the cytoplasm. The catalysed reaction is D-ribose 5-phosphate + ATP = 5-phospho-alpha-D-ribose 1-diphosphate + AMP + H(+). It functions in the pathway metabolic intermediate biosynthesis; 5-phospho-alpha-D-ribose 1-diphosphate biosynthesis; 5-phospho-alpha-D-ribose 1-diphosphate from D-ribose 5-phosphate (route I): step 1/1. Its function is as follows. Involved in the biosynthesis of the central metabolite phospho-alpha-D-ribosyl-1-pyrophosphate (PRPP) via the transfer of pyrophosphoryl group from ATP to 1-hydroxyl of ribose-5-phosphate (Rib-5-P). This chain is Putative ribose-phosphate pyrophosphokinase 2, found in Streptococcus mutans serotype c (strain ATCC 700610 / UA159).